The sequence spans 259 residues: BTB/POZ domain-containing protein KCTD4 (259 aa).

Positions 1–22 (MEHKINRREKEKDYEGKHNSLE) are disordered. The BTB domain maps to 33 to 134 (TLMTLNVGGY…EVKSRWEKEQ (102 aa)).

The sequence is that of BTB/POZ domain-containing protein KCTD4 (KCTD4) from Bos taurus (Bovine).